Consider the following 406-residue polypeptide: Peptidase T (406 aa).

H82 provides a ligand contact to Zn(2+). D84 is an active-site residue. D142 lines the Zn(2+) pocket. The active-site Proton acceptor is E176. E177, D199, and H381 together coordinate Zn(2+).

The protein belongs to the peptidase M20B family. The cofactor is Zn(2+).

The protein resides in the cytoplasm. It catalyses the reaction Release of the N-terminal residue from a tripeptide.. In terms of biological role, cleaves the N-terminal amino acid of tripeptides. In Streptococcus agalactiae serotype Ia (strain ATCC 27591 / A909 / CDC SS700), this protein is Peptidase T.